Here is a 310-residue protein sequence, read N- to C-terminus: uncharacterized protein (310 aa).

This is an uncharacterized protein from Methanocaldococcus jannaschii (strain ATCC 43067 / DSM 2661 / JAL-1 / JCM 10045 / NBRC 100440) (Methanococcus jannaschii).